Consider the following 247-residue polypeptide: 2,3-bisphosphoglycerate-dependent phosphoglycerate mutase (247 aa).

Substrate contacts are provided by residues 8–15 (RHGESQWN), 21–22 (TG), arginine 60, 87–90 (ERHY), lysine 98, 114–115 (RR), and 183–184 (GN). Residue histidine 9 is the Tele-phosphohistidine intermediate of the active site. Glutamate 87 acts as the Proton donor/acceptor in catalysis.

The protein belongs to the phosphoglycerate mutase family. BPG-dependent PGAM subfamily.

It catalyses the reaction (2R)-2-phosphoglycerate = (2R)-3-phosphoglycerate. It participates in carbohydrate degradation; glycolysis; pyruvate from D-glyceraldehyde 3-phosphate: step 3/5. In terms of biological role, catalyzes the interconversion of 2-phosphoglycerate and 3-phosphoglycerate. The protein is 2,3-bisphosphoglycerate-dependent phosphoglycerate mutase of Prosthecochloris aestuarii (strain DSM 271 / SK 413).